Reading from the N-terminus, the 124-residue chain is Holo-[acyl-carrier-protein] synthase (124 aa).

Mg(2+) is bound by residues aspartate 8 and glutamate 55.

This sequence belongs to the P-Pant transferase superfamily. AcpS family. It depends on Mg(2+) as a cofactor.

It is found in the cytoplasm. The catalysed reaction is apo-[ACP] + CoA = holo-[ACP] + adenosine 3',5'-bisphosphate + H(+). Transfers the 4'-phosphopantetheine moiety from coenzyme A to a Ser of acyl-carrier-protein. The protein is Holo-[acyl-carrier-protein] synthase of Desulfovibrio desulfuricans (strain ATCC 27774 / DSM 6949 / MB).